The following is a 186-amino-acid chain: MAMLLNQAQPPQTRDGGGTQGASLGPGVPVGQQQLGLQQQQQDFDPVQRYRMLIPQLKESLQNLMKIAAQNLAQNTNIDNGQKSADGPVQRFDKSLEEFYALCDQMELCLRLAYECLSQSYDSAKHSPTLVPTATKPDAVQTESLPYTQYLSMIKSQISCAKDIHNALLECSKKIMGKTPNTQGGL.

The segment covering 1–12 (MAMLLNQAQPPQ) has biased composition (polar residues). Residues 1 to 41 (MAMLLNQAQPPQTRDGGGTQGASLGPGVPVGQQQLGLQQQQ) are disordered. Residues 25–41 (GPGVPVGQQQLGLQQQQ) are compositionally biased toward low complexity.

This sequence belongs to the Mediator complex subunit 29 family. As to quaternary structure, component of the Mediator complex.

It localises to the nucleus. Its function is as follows. Component of the Mediator complex, a coactivator involved in the regulated transcription of nearly all RNA polymerase II-dependent genes. Mediator functions as a bridge to convey information from gene-specific regulatory proteins to the basal RNA polymerase II transcription machinery. Mediator is recruited to promoters by direct interactions with regulatory proteins and serves as a scaffold for the assembly of a functional preinitiation complex with RNA polymerase II and the general transcription factors. The sequence is that of Mediator of RNA polymerase II transcription subunit 29 (med29) from Xenopus laevis (African clawed frog).